Consider the following 273-residue polypeptide: Manganese catalase (273 aa).

Glu35 is a Mn(2+) binding site. Asp57 and Asp61 together coordinate Ca(2+). Mn(2+)-binding residues include Glu66, His69, Glu149, and His182. Ca(2+) is bound by residues Asn220, Ser222, and Gly224. Residues 254-273 (EKPELKPAPPCVHNTLPGRE) are disordered.

This sequence belongs to the manganese catalase family. Homohexamer. The cofactor is Ca(2+). It depends on Mn(2+) as a cofactor.

The enzyme catalyses 2 H2O2 = O2 + 2 H2O. Inhibited in the presence of EDTA. Resistant to inhibition by sodium azide. Functionally, catalyzes the decomposition of hydrogen peroxide into water and oxygen. No significant activity could be detected with any of the other tested substrates, including glutathione, pyrogallol, NADH, NADPH and o-dianisidine. The sequence is that of Manganese catalase from Bacillus subtilis.